The primary structure comprises 250 residues: Osmotin-like protein OSML15 (250 aa).

Positions 1–21 (MSHLTTCLVFFLLAFVTYTNA) are cleaved as a signal peptide. 8 disulfides stabilise this stretch: C31/C226, C73/C83, C88/C94, C142/C214, C147/C197, C155/C165, C169/C178, and C179/C184.

This sequence belongs to the thaumatin family.

The protein is Osmotin-like protein OSML15 of Solanum commersonii (Commerson's wild potato).